The chain runs to 481 residues: Uridine 5'-monophosphate synthase (481 aa).

The OPRTase stretch occupies residues 1 to 214; that stretch reads MEVASQALGP…VFSAANHNGL (214 aa). Y37 is modified (phosphotyrosine). Residues 215-220 are domain linker; the sequence is PPPEKK. Residues 221-481 are OMPdecase; sequence ACKELSFGAR…EAYLSRLAVQ (261 aa). Residue S257 participates in orotidine 5'-phosphate binding. UMP contacts are provided by residues S257, D259, and 281–283; that span reads KTH. Orotidine 5'-phosphate-binding positions include K281, K314, D317, T321, S372, 430 to 432, and 450 to 451; these read QQY and GR. Catalysis depends on for OMPdecase activity residues K314 and D317. UMP-binding positions include D317, T321, S372, 430–432, and 450–451; these read QQY and GR.

This sequence in the N-terminal section; belongs to the purine/pyrimidine phosphoribosyltransferase family. In the C-terminal section; belongs to the OMP decarboxylase family. In terms of assembly, homodimer; dimerization is required for enzymatic activity.

It carries out the reaction orotidine 5'-phosphate + diphosphate = orotate + 5-phospho-alpha-D-ribose 1-diphosphate. The enzyme catalyses orotidine 5'-phosphate + H(+) = UMP + CO2. Its pathway is pyrimidine metabolism; UMP biosynthesis via de novo pathway; UMP from orotate: step 1/2. It functions in the pathway pyrimidine metabolism; UMP biosynthesis via de novo pathway; UMP from orotate: step 2/2. Bifunctional enzyme catalyzing the last two steps of de novo pyrimidine biosynthesis, orotate phosphoribosyltransferase (OPRT), which converts orotate to orotidine-5'-monophosphate (OMP), and orotidine-5'-monophosphate decarboxylase (ODC), the terminal enzymatic reaction that decarboxylates OMP to uridine monophosphate (UMP). This chain is Uridine 5'-monophosphate synthase (Umps), found in Mus musculus (Mouse).